The chain runs to 474 residues: Putative response regulator NtrX-like (474 aa).

One can recognise a Response regulatory domain in the interval 5–121; it reads DVLIVDDEES…KLVILLTRAC (117 aa). At D54 the chain carries 4-aspartylphosphate. In terms of domain architecture, Sigma-54 factor interaction spans 143–368; that stretch reads LVGECSVTLK…LRNVVEWTLI (226 aa). ATP is bound by residues 171-178 and 231-240; these read GKVGSGKE and ANNGTLYIDE.

Its function is as follows. Member of the two-component regulatory system RC0849/RC0948. The polypeptide is Putative response regulator NtrX-like (Rickettsia conorii (strain ATCC VR-613 / Malish 7)).